Here is a 176-residue protein sequence, read N- to C-terminus: MATPEKAAAVAELTDKFRSSNAAVLTEYRGLTVAQLKTLRRSLGENAQYAVVKNTLTKIAANEAGITLDDQLFAGPTAVAFVTGDPVESAKGLRDFAKDNPNLVIKGGVLDGKAMSADEIKKLADLESREVLLSKLAGAFKGKQSQTAQLFQALPSKLVRTVDALRAKQDEQGGAE.

It belongs to the universal ribosomal protein uL10 family. Part of the ribosomal stalk of the 50S ribosomal subunit. The N-terminus interacts with L11 and the large rRNA to form the base of the stalk. The C-terminus forms an elongated spine to which L12 dimers bind in a sequential fashion forming a multimeric L10(L12)X complex.

Its function is as follows. Forms part of the ribosomal stalk, playing a central role in the interaction of the ribosome with GTP-bound translation factors. The protein is Large ribosomal subunit protein uL10 (rplJ) of Streptomyces coelicolor (strain ATCC BAA-471 / A3(2) / M145).